Reading from the N-terminus, the 106-residue chain is Large ribosomal subunit protein uL24 (106 aa).

It belongs to the universal ribosomal protein uL24 family. Part of the 50S ribosomal subunit.

In terms of biological role, one of two assembly initiator proteins, it binds directly to the 5'-end of the 23S rRNA, where it nucleates assembly of the 50S subunit. Its function is as follows. One of the proteins that surrounds the polypeptide exit tunnel on the outside of the subunit. The sequence is that of Large ribosomal subunit protein uL24 from Parabacteroides distasonis (strain ATCC 8503 / DSM 20701 / CIP 104284 / JCM 5825 / NCTC 11152).